We begin with the raw amino-acid sequence, 400 residues long: Elongation factor Tu 2 (400 aa).

In terms of domain architecture, tr-type G spans 10–209 (KPHVNIGTIG…KVDEYIPTPQ (200 aa)). The G1 stretch occupies residues 19–26 (GHVDHGKT). Residue 19-26 (GHVDHGKT) participates in GTP binding. Mg(2+) is bound at residue Thr-26. The segment at 60-64 (GITIN) is G2. The G3 stretch occupies residues 81–84 (DCPG). GTP is bound by residues 81–85 (DCPGH) and 136–139 (NKAD). The segment at 136–139 (NKAD) is G4. Residues 174–176 (SAL) form a G5 region.

This sequence belongs to the TRAFAC class translation factor GTPase superfamily. Classic translation factor GTPase family. EF-Tu/EF-1A subfamily. Monomer.

The protein localises to the cytoplasm. It catalyses the reaction GTP + H2O = GDP + phosphate + H(+). Its function is as follows. GTP hydrolase that promotes the GTP-dependent binding of aminoacyl-tRNA to the A-site of ribosomes during protein biosynthesis. The sequence is that of Elongation factor Tu 2 from Carboxydothermus hydrogenoformans (strain ATCC BAA-161 / DSM 6008 / Z-2901).